The sequence spans 412 residues: D-amino acid dehydrogenase 3 (412 aa).

FAD is bound at residue Ile4–Tyr18.

Belongs to the DadA oxidoreductase family. It depends on FAD as a cofactor.

The enzyme catalyses a D-alpha-amino acid + A + H2O = a 2-oxocarboxylate + AH2 + NH4(+). In terms of biological role, oxidative deamination of D-amino acids. In Mesorhizobium japonicum (strain LMG 29417 / CECT 9101 / MAFF 303099) (Mesorhizobium loti (strain MAFF 303099)), this protein is D-amino acid dehydrogenase 3 (dadA3).